We begin with the raw amino-acid sequence, 690 residues long: Elongation factor G (690 aa).

Positions 8-282 (ERVRNIGIAA…AVIDYLPAPV (275 aa)) constitute a tr-type G domain. GTP-binding positions include 17–24 (AHIDAGKT), 81–85 (DTPGH), and 135–138 (NKMD).

Belongs to the TRAFAC class translation factor GTPase superfamily. Classic translation factor GTPase family. EF-G/EF-2 subfamily.

Its subcellular location is the cytoplasm. In terms of biological role, catalyzes the GTP-dependent ribosomal translocation step during translation elongation. During this step, the ribosome changes from the pre-translocational (PRE) to the post-translocational (POST) state as the newly formed A-site-bound peptidyl-tRNA and P-site-bound deacylated tRNA move to the P and E sites, respectively. Catalyzes the coordinated movement of the two tRNA molecules, the mRNA and conformational changes in the ribosome. In Parasynechococcus marenigrum (strain WH8102), this protein is Elongation factor G.